A 122-amino-acid chain; its full sequence is Large ribosomal subunit protein uL14 (122 aa).

It belongs to the universal ribosomal protein uL14 family. Part of the 50S ribosomal subunit. Forms a cluster with proteins L3 and L19. In the 70S ribosome, L14 and L19 interact and together make contacts with the 16S rRNA in bridges B5 and B8.

In terms of biological role, binds to 23S rRNA. Forms part of two intersubunit bridges in the 70S ribosome. This chain is Large ribosomal subunit protein uL14, found in Nocardia farcinica (strain IFM 10152).